Reading from the N-terminus, the 199-residue chain is FMN-dependent NADH:quinone oxidoreductase 2 (199 aa).

Residues Ser-10, 16 to 18 (SVS), and 96 to 99 (MYNF) contribute to the FMN site.

The protein belongs to the azoreductase type 1 family. In terms of assembly, homodimer. The cofactor is FMN.

It carries out the reaction 2 a quinone + NADH + H(+) = 2 a 1,4-benzosemiquinone + NAD(+). The enzyme catalyses N,N-dimethyl-1,4-phenylenediamine + anthranilate + 2 NAD(+) = 2-(4-dimethylaminophenyl)diazenylbenzoate + 2 NADH + 2 H(+). Its function is as follows. Quinone reductase that provides resistance to thiol-specific stress caused by electrophilic quinones. Also exhibits azoreductase activity. Catalyzes the reductive cleavage of the azo bond in aromatic azo compounds to the corresponding amines. The chain is FMN-dependent NADH:quinone oxidoreductase 2 from Pseudomonas fluorescens (strain Pf0-1).